Reading from the N-terminus, the 445-residue chain is Phosphoglucosamine mutase (445 aa).

The Phosphoserine intermediate role is filled by Ser-102. Mg(2+) is bound by residues Ser-102, Asp-241, Asp-243, and Asp-245. Position 102 is a phosphoserine (Ser-102).

This sequence belongs to the phosphohexose mutase family. The cofactor is Mg(2+). Post-translationally, activated by phosphorylation.

The enzyme catalyses alpha-D-glucosamine 1-phosphate = D-glucosamine 6-phosphate. Its function is as follows. Catalyzes the conversion of glucosamine-6-phosphate to glucosamine-1-phosphate. This Escherichia coli O127:H6 (strain E2348/69 / EPEC) protein is Phosphoglucosamine mutase.